A 397-amino-acid polypeptide reads, in one-letter code: Nickel-cobalt-cadmium resistance protein NccB (397 aa).

Residues 10 to 30 (PSWPMIAGVAAAAALVGFGAA) form a helical membrane-spanning segment. Residues 137–195 (EAAAMAAERKVAQARADLARKTYERESSLFQQGVTPRQEMESARIALDVAQAEVQRAAT) adopt a coiled-coil conformation.

This sequence belongs to the membrane fusion protein (MFP) (TC 8.A.1) family.

The protein localises to the cell inner membrane. Functionally, component of the NCC cation efflux system that confers resistance to nickel, cobalt and cadmium. This chain is Nickel-cobalt-cadmium resistance protein NccB (nccB), found in Alcaligenes xylosoxydans xylosoxydans (Achromobacter xylosoxidans).